The sequence spans 580 residues: Cyclin-K (580 aa).

The disordered stretch occupies residues Lys-262–Arg-580. 2 stretches are compositionally biased toward low complexity: residues Gln-263–Pro-277 and Val-285–Lys-321. Phosphoserine is present on residues Ser-324, Ser-328, Ser-329, and Ser-340. Residues Pro-377–Glu-386 show a composition bias toward low complexity. The span at Gln-400 to Ser-426 shows a compositional bias: pro residues. Residues Ser-427–Tyr-444 are compositionally biased toward low complexity. A compositionally biased stretch (pro residues) spans Val-477–Pro-568.

Belongs to the cyclin family. Cyclin C subfamily. In terms of assembly, regulatory subunit of cyclin-dependent kinases. Identified in a complex with a kinase and the RNA polymerase II holoenzyme. Interacts with POLR2A. Interacts with CDK12 and CDK13. Interacts with CDK9 according to PubMed:10574912; does not interact with CDK9 according to PubMed:22012619. (Microbial infection) Interacts with human herpes virus 1 (HHV-1) transcriptional regulator ICP22. In terms of tissue distribution, widely expressed. Highest levels in testis.

Its subcellular location is the nucleus. Regulatory subunit of cyclin-dependent kinases that mediates activation of target kinases. Plays a role in transcriptional regulation via its role in regulating the phosphorylation of the C-terminal domain (CTD) of the large subunit of RNA polymerase II (POLR2A). The polypeptide is Cyclin-K (CCNK) (Homo sapiens (Human)).